A 105-amino-acid chain; its full sequence is Putative regulatory protein COPRO5265_1186 (105 aa).

A disordered region spans residues R76 to V105. Over residues E78 to V105 the composition is skewed to acidic residues.

It belongs to the RemA family.

The sequence is that of Putative regulatory protein COPRO5265_1186 from Coprothermobacter proteolyticus (strain ATCC 35245 / DSM 5265 / OCM 4 / BT).